The chain runs to 144 residues: (R)-specific enoyl-CoA hydratase (144 aa).

Residues 13–128 (DIKEGQSASL…TFRTTCTVAG (116 aa)) form the MaoC-like domain.

Homotetramer.

The enzyme catalyses a (3R)-3-hydroxyacyl-CoA = a (2E)-enoyl-CoA + H2O. Functionally, catalyzes the hydration of trans-2-enoyl-CoAs with a chain-length of 4-6 carbon atoms, forming the corresponding (3R)-3-hydroxyacyl-CoAs, which can then be utilized for the production of polyhydroxyalkanoates (PHA) polymers. Cannot use trans-2,3-octenoyl-CoA as substrate. In Rhodospirillum rubrum (strain ATCC 11170 / ATH 1.1.1 / DSM 467 / LMG 4362 / NCIMB 8255 / S1), this protein is (R)-specific enoyl-CoA hydratase.